Consider the following 330-residue polypeptide: Free fatty acid receptor 2 (330 aa).

Residues 1 to 8 are Extracellular-facing; sequence MTPDWHSS. The helical transmembrane segment at 9–29 threads the bilayer; sequence LILTAYILIFLTGLPANLLAL. The Cytoplasmic segment spans residues 30–43; it reads RAFVSRVRQPQPAP. A helical transmembrane segment spans residues 44–64; the sequence is VHILLLNLTLADLLLLLLLPF. Topologically, residues 65–79 are extracellular; that stretch reads RIVEAASNFRWYLPK. The chain crosses the membrane as a helical span at residues 80–100; it reads IVCALTGFGFYSSIYCSTWLL. Topologically, residues 101 to 126 are cytoplasmic; it reads AGISIERYLGVAFPVQYKLSRRPLYG. A helical membrane pass occupies residues 127-147; it reads VIAALVAWIMSFGHCTIVIIV. The Extracellular portion of the chain corresponds to 148-184; it reads QYLNSTEQVGTENQITCYENFTQAQLDVVLPVRLELC. N-linked (GlcNAc...) asparagine glycosylation is found at asparagine 151 and asparagine 167. The helical transmembrane segment at 185–205 threads the bilayer; the sequence is LVLFFVPMTVTIFCYWRFVWI. The Cytoplasmic segment spans residues 206–219; sequence MLTQPHVGAQRRRR. The chain crosses the membrane as a helical span at residues 220–240; the sequence is AVGLAVVTLLNFLVCFGPYNM. The Extracellular segment spans residues 241–255; that stretch reads SHLVGFHLRQSPSWR. Residues 256-276 traverse the membrane as a helical segment; the sequence is VEAVVFSSLNASLDPLLFYFS. The Cytoplasmic portion of the chain corresponds to 277–330; the sequence is SSVVRRAFGKGLLLLRNPGSSMLGRGAEETVEGTKTDRGGSQTEGAQSSDFVTE. The disordered stretch occupies residues 300 to 330; it reads GRGAEETVEGTKTDRGGSQTEGAQSSDFVTE. Positions 302–314 are enriched in basic and acidic residues; that stretch reads GAEETVEGTKTDR. Over residues 315–330 the composition is skewed to polar residues; the sequence is GGSQTEGAQSSDFVTE.

The protein belongs to the G-protein coupled receptor 1 family. Interacts with FCN1 (via Fibrinogen C-terminal domain). In terms of tissue distribution, detected in whole wall and separated mucosa in the distal ileum and colon. Expressed by enteroendocrine cells expressing peptide YY (PYY) (at protein level).

The protein localises to the cell membrane. Its function is as follows. G protein-coupled receptor that is activated by a major product of dietary fiber digestion, the short chain fatty acids (SCFAs), and that plays a role in the regulation of whole-body energy homeostasis and in intestinal immunity. In omnivorous mammals, the short chain fatty acids acetate, propionate and butyrate are produced primarily by the gut microbiome that metabolizes dietary fibers. SCFAs serve as a source of energy but also act as signaling molecules. That G protein-coupled receptor is probably coupled to the pertussis toxin-sensitive, G(i/o)-alpha family of G proteins but also to the Gq family. Its activation results in the formation of inositol 1,4,5-trisphosphate, the mobilization of intracellular calcium, the phosphorylation of the MAPK3/ERK1 and MAPK1/ERK2 kinases and the inhibition of intracellular cAMP accumulation. May play a role in glucose homeostasis by regulating the secretion of GLP-1, in response to short-chain fatty acids accumulating in the intestine. May also regulate the production of LEP/Leptin, a hormone acting on the central nervous system to inhibit food intake. Finally, may also regulate whole-body energy homeostasis through adipogenesis regulating both differentiation and lipid storage of adipocytes. In parallel to its role in energy homeostasis, may also mediate the activation of the inflammatory and immune responses by SCFA in the intestine, regulating the rapid production of chemokines and cytokines. May also play a role in the resolution of the inflammatory response and control chemotaxis in neutrophils. In addition to SCFAs, may also be activated by the extracellular lectin FCN1 in a process leading to activation of monocytes and inducing the secretion of interleukin-8/IL-8 in response to the presence of microbes. This chain is Free fatty acid receptor 2 (Ffar2), found in Rattus norvegicus (Rat).